Reading from the N-terminus, the 99-residue chain is Essential MCU regulator, mitochondrial (99 aa).

The N-terminal 39 residues, 1–39, are a transit peptide targeting the mitochondrion; sequence MAARVGVLSVAGFRAAARAGGLLRASKQSSAVSHVPCRT. Over 40–57 the chain is Mitochondrial matrix; sequence AIATSAGTVLPKPEKVSF. Residues 58-77 traverse the membrane as a helical segment; that stretch reads GLLRVFTVVIPFLYIGTLIS. Residues 78-99 lie on the Mitochondrial intermembrane side of the membrane; sequence KNFAALLEEHDIFVPEDDDDDD.

Belongs to the SMDT1/EMRE family. Component of the uniplex complex.

The protein resides in the mitochondrion inner membrane. Its function is as follows. Essential regulatory subunit of the mitochondrial calcium uniporter complex (uniplex), a complex that mediates calcium uptake into mitochondria. Required to bridge the calcium-sensing proteins micu1 with the calcium-conducting subunit mcu. Acts by mediating activation of mcu and retention of micu1 to the mcu pore, in order to ensure tight regulation of the uniplex complex and appropriate responses to intracellular calcium signaling. This is Essential MCU regulator, mitochondrial from Xenopus tropicalis (Western clawed frog).